We begin with the raw amino-acid sequence, 396 residues long: Decapping and exoribonuclease protein (396 aa).

Positions 1 to 20 (MDPRGTKRGAEKTEVAEPRN) are enriched in basic and acidic residues. Positions 1-37 (MDPRGTKRGAEKTEVAEPRNKLPRPAPSLPTDPALYS) are disordered. Substrate-binding positions include Arg-58, Glu-101, and 131 to 133 (WRG). A Mg(2+)-binding site is contributed by Glu-192. The substrate site is built by Cys-217 and Glu-234. Residues Glu-234, Asp-236, Glu-253, and Leu-254 each contribute to the Mg(2+) site. Substrate contacts are provided by Lys-255 and Gln-280. A Phosphothreonine modification is found at Thr-392. Ser-394 carries the post-translational modification Phosphoserine.

It belongs to the DXO/Dom3Z family. The cofactor is Mg(2+). As to expression, ubiquitously expressed.

It localises to the nucleus. The catalysed reaction is a 5'-end triphospho-ribonucleoside in mRNA + H2O = a 5'-end phospho-ribonucleoside in mRNA + diphosphate + H(+). It carries out the reaction a 5'-end NAD(+)-phospho-ribonucleoside in mRNA + H2O = a 5'-end phospho-ribonucleoside in mRNA + NAD(+) + H(+). It catalyses the reaction a 5'-end NAD(+)-phospho-ribonucleoside in snoRNA + H2O = a 5'-end phospho-ribonucleoside in snoRNA + NAD(+) + H(+). The enzyme catalyses a 5'-end (N(7)-methyl 5'-triphosphoguanosine)-ribonucleoside-ribonucleotide in mRNA + H2O = a (N(7)-methyl 5'-triphosphoguanosine)-nucleoside + a 5'-end phospho-ribonucleoside in mRNA + H(+). The catalysed reaction is a 5'-end FAD-phospho-ribonucleoside in mRNA + H2O = a 5'-end phospho-ribonucleoside in mRNA + FAD + H(+). It carries out the reaction a 5'-end CoA-ribonucleoside in mRNA + H2O = 3'-dephospho-CoA + a 5'-end phospho-ribonucleoside in mRNA + H(+). In terms of biological role, decapping enzyme for NAD-capped RNAs: specifically hydrolyzes the nicotinamide adenine dinucleotide (NAD) cap from a subset of RNAs by removing the entire NAD moiety from the 5'-end of an NAD-capped RNA. The NAD-cap is present at the 5'-end of some RNAs and snoRNAs. In contrast to the canonical 5'-end N7 methylguanosine (m7G) cap, the NAD cap promotes mRNA decay. Preferentially acts on NAD-capped transcripts in response to environmental stress. Also acts as a non-canonical decapping enzyme that removes the entire cap structure of m7G capped or incompletely capped RNAs and mediates their subsequent degradation. Specifically degrades pre-mRNAs with a defective 5'-end m7G cap and is part of a pre-mRNA capping quality control. Has decapping activity toward incomplete 5'-end m7G cap mRNAs such as unmethylated 5'-end-capped RNA (cap0), while it has no activity toward 2'-O-ribose methylated m7G cap (cap1). In contrast to canonical decapping enzymes DCP2 and NUDT16, which cleave the cap within the triphosphate linkage, the decapping activity releases the entire cap structure GpppN and a 5'-end monophosphate RNA. Also has 5'-3' exoribonuclease activities: The 5'-end monophosphate RNA is then degraded by the 5'-3' exoribonuclease activity, enabling this enzyme to decap and degrade incompletely capped mRNAs. Also possesses RNA 5'-pyrophosphohydrolase activity by hydrolyzing the 5'-end triphosphate to release pyrophosphates. Exhibits decapping activity towards FAD-capped RNAs. Exhibits decapping activity towards dpCoA-capped RNAs in vitro. The polypeptide is Decapping and exoribonuclease protein (Homo sapiens (Human)).